The primary structure comprises 333 residues: Testin-2 (333 aa).

The N-terminal stretch at 1 to 17 (MIAVLFLAILCLEIDST) is a signal peptide. 3 disulfides stabilise this stretch: Cys135/Cys178, Cys169/Cys211, and Cys269/Cys322. Residue Asn173 is glycosylated (N-linked (GlcNAc...) asparagine). Active-site residues include His276 and Asn300.

Belongs to the peptidase C1 family. As to expression, expressed in testis and ovary. Low level in spleen, epididymis, kidney, and uterus. Expressed in primary cultures of Sertoli cells.

The protein resides in the secreted. This chain is Testin-2, found in Mus musculus (Mouse).